Reading from the N-terminus, the 416-residue chain is Enterobactin exporter EntS (416 aa).

The Cytoplasmic segment spans residues 1–21 (MNKQSWLLNLSLLKTHPAFRA). Residues 22–42 (VFLARFISIVSLGLLGVAVPV) form a helical membrane-spanning segment. Over 43–55 (QIQMMTHSTWQVG) the chain is Periplasmic. Residues 56–76 (LSVTLTGGAMFVGLMVGGVLA) form a helical membrane-spanning segment. The Cytoplasmic portion of the chain corresponds to 77-83 (DRYERKK). The helical transmembrane segment at 84–104 (VILLARGTCGIGFIGLCLNAL) threads the bilayer. Residues 105–109 (LPEPS) lie on the Periplasmic side of the membrane. Residues 110–130 (LLAIYLLGLWDGFFASLGVTA) form a helical membrane-spanning segment. Over 131–156 (LLAATPALVGRENLMQAGAITMLTVR) the chain is Cytoplasmic. A helical membrane pass occupies residues 157–177 (LGSVNSPMIGGLLLAIGGVAW). N178 is a topological domain (periplasmic). A helical transmembrane segment spans residues 179–199 (YGLAAAGTFITLLPLLSLPAL). Over 200-218 (PPPPQPREHPLKSLLAGFR) the chain is Cytoplasmic. The chain crosses the membrane as a helical span at residues 219-239 (FLLASPLVGGIALLGGLLTMA). The Periplasmic portion of the chain corresponds to 240–256 (SAVRVLYPALADNWQMS). Residues 257-277 (AAQIGFLYAAIPLGAAIGALT) form a helical membrane-spanning segment. Over 278-287 (SGKLAHSARP) the chain is Cytoplasmic. Residues 288–307 (GLLMLLSTLGSFLAIGLFGL) traverse the membrane as a helical segment. Residues 308–313 (MPMWIL) are Periplasmic-facing. Residues 314 to 336 (GVVCLALFGWLSAVSSLLQYTML) traverse the membrane as a helical segment. At 337–356 (QTQTPEVMLGRINGLWTAQN) the chain is on the cytoplasmic side. A helical transmembrane segment spans residues 357–377 (VTGDAIGAALLGGLGAMMTPV). A topological domain (periplasmic) is located at residue A378. A helical transmembrane segment spans residues 379-399 (SASASGFGLLIIGVLLLLVLV). The Cytoplasmic portion of the chain corresponds to 400–416 (ELRHFRQTPPQVTASDS).

Belongs to the major facilitator superfamily. EntS (TC 2.A.1.38) family.

The protein resides in the cell inner membrane. Functionally, component of an export pathway for enterobactin. The protein is Enterobactin exporter EntS of Shigella dysenteriae serotype 1 (strain Sd197).